A 316-amino-acid chain; its full sequence is Ornithine carbamoyltransferase (316 aa).

Carbamoyl phosphate is bound by residues 59–62 (STRT), glutamine 86, arginine 110, and 137–140 (HPCQ). Residues asparagine 168, aspartate 232, and 236 to 237 (SM) each bind L-ornithine. Carbamoyl phosphate is bound by residues 273–274 (CL) and arginine 301.

It belongs to the aspartate/ornithine carbamoyltransferase superfamily. OTCase family.

It is found in the cytoplasm. The catalysed reaction is carbamoyl phosphate + L-ornithine = L-citrulline + phosphate + H(+). It functions in the pathway amino-acid biosynthesis; L-arginine biosynthesis; L-arginine from L-ornithine and carbamoyl phosphate: step 1/3. Functionally, reversibly catalyzes the transfer of the carbamoyl group from carbamoyl phosphate (CP) to the N(epsilon) atom of ornithine (ORN) to produce L-citrulline. The protein is Ornithine carbamoyltransferase of Listeria innocua serovar 6a (strain ATCC BAA-680 / CLIP 11262).